We begin with the raw amino-acid sequence, 324 residues long: Heparan sulfate 2-O-sulfotransferase hst-2 (324 aa).

Residues 1–6 (MLWKKR) lie on the Cytoplasmic side of the membrane. Residues 7-24 (KVLYFAGISVFILILLLL) traverse the membrane as a helical; Signal-anchor for type II membrane protein segment. The Lumenal portion of the chain corresponds to 25–324 (KLNSKPKANV…QYHFEKIKPS (300 aa)). 2 N-linked (GlcNAc...) asparagine glycosylation sites follow: N75 and N94. Residues H107 and H109 contribute to the active site. N161 is a glycosylation site (N-linked (GlcNAc...) asparagine). 2 cysteine pairs are disulfide-bonded: C167–C175 and C188–C194.

Belongs to the sulfotransferase 3 family. In terms of assembly, homotrimer. Present in the hypodermis, muscle, distal tip cells (DTCs) and in neurons (at protein level).

It localises to the golgi apparatus membrane. Its function is as follows. Catalyzes the transfer of sulfate to the C2-position of selected hexuronic acid residues within the maturing heparan sulfate (HS). Involved in cell adhesion and guidance by specifically modifying proteoglycans in the extracellular matrix and on the cell surface that are essential for axon migrations. The polypeptide is Heparan sulfate 2-O-sulfotransferase hst-2 (Caenorhabditis elegans).